The chain runs to 597 residues: Aspartate--tRNA(Asp/Asn) ligase (597 aa).

Glu-175 contributes to the L-aspartate binding site. Residues 199-202 (QQYK) are aspartate. L-aspartate contacts are provided by Arg-221 and His-454. 221–223 (RDE) provides a ligand contact to ATP. ATP is bound at residue Glu-488. Arg-495 is a binding site for L-aspartate. Residue 540–543 (GIDR) coordinates ATP.

The protein belongs to the class-II aminoacyl-tRNA synthetase family. Type 1 subfamily. In terms of assembly, homodimer.

Its subcellular location is the cytoplasm. It carries out the reaction tRNA(Asx) + L-aspartate + ATP = L-aspartyl-tRNA(Asx) + AMP + diphosphate. In terms of biological role, aspartyl-tRNA synthetase with relaxed tRNA specificity since it is able to aspartylate not only its cognate tRNA(Asp) but also tRNA(Asn). Reaction proceeds in two steps: L-aspartate is first activated by ATP to form Asp-AMP and then transferred to the acceptor end of tRNA(Asp/Asn). The protein is Aspartate--tRNA(Asp/Asn) ligase of Bartonella tribocorum (strain CIP 105476 / IBS 506).